Here is a 225-residue protein sequence, read N- to C-terminus: UPF0700 transmembrane protein YoaK (225 aa).

6 consecutive transmembrane segments (helical) span residues 10–30 (LLSL…LSLG), 56–76 (VFNS…ATLM), 99–119 (ILFV…HILI), 137–157 (GIAG…LEDI), 174–194 (TVLR…VALA), and 197–217 (DFYH…MMTA).

It belongs to the UPF0700 family.

The protein resides in the cell membrane. The chain is UPF0700 transmembrane protein YoaK (yoaK) from Bacillus subtilis (strain 168).